The sequence spans 136 residues: Histone H2B.5 (136 aa).

The span at 1 to 36 (MAPKAEKKPAAEKKPVETEKKPKAEKRVPGKDGGAD) shows a compositional bias: basic and acidic residues. A disordered region spans residues 1 to 44 (MAPKAEKKPAAEKKPVETEKKPKAEKRVPGKDGGADKKKKKAKK). N6-acetyllysine occurs at positions 7 and 26. Residue Lys132 forms a Glycyl lysine isopeptide (Lys-Gly) (interchain with G-Cter in ubiquitin) linkage.

The protein belongs to the histone H2B family. As to quaternary structure, the nucleosome is a histone octamer containing two molecules each of H2A, H2B, H3 and H4 assembled in one H3-H4 heterotetramer and two H2A-H2B heterodimers. The octamer wraps approximately 147 bp of DNA. In terms of processing, can be acetylated to form H2BK6ac and H2BK33ac. Monoubiquitinated to form H2BK143ub1; may give a specific tag for epigenetic transcriptional activation.

It localises to the nucleus. The protein localises to the chromosome. In terms of biological role, core component of nucleosome. Nucleosomes wrap and compact DNA into chromatin, limiting DNA accessibility to the cellular machineries which require DNA as a template. Histones thereby play a central role in transcription regulation, DNA repair, DNA replication and chromosomal stability. DNA accessibility is regulated via a complex set of post-translational modifications of histones, also called histone code, and nucleosome remodeling. This is Histone H2B.5 from Triticum aestivum (Wheat).